Here is a 346-residue protein sequence, read N- to C-terminus: Holliday junction branch migration complex subunit RuvB (346 aa).

A large ATPase domain (RuvB-L) region spans residues Met-1–Tyr-182. ATP contacts are provided by residues Leu-21, Arg-22, Gly-63, Lys-66, Thr-67, Thr-68, Glu-129 to Phe-131, Arg-172, Tyr-182, and Arg-219. Residue Thr-67 coordinates Mg(2+). The interval Thr-183 to Leu-253 is small ATPAse domain (RuvB-S). Residues Asn-256 to Asn-346 form a head domain (RuvB-H) region. Arg-292, Arg-311, and Arg-316 together coordinate DNA.

The protein belongs to the RuvB family. In terms of assembly, homohexamer. Forms an RuvA(8)-RuvB(12)-Holliday junction (HJ) complex. HJ DNA is sandwiched between 2 RuvA tetramers; dsDNA enters through RuvA and exits via RuvB. An RuvB hexamer assembles on each DNA strand where it exits the tetramer. Each RuvB hexamer is contacted by two RuvA subunits (via domain III) on 2 adjacent RuvB subunits; this complex drives branch migration. In the full resolvosome a probable DNA-RuvA(4)-RuvB(12)-RuvC(2) complex forms which resolves the HJ.

It localises to the cytoplasm. It catalyses the reaction ATP + H2O = ADP + phosphate + H(+). Functionally, the RuvA-RuvB-RuvC complex processes Holliday junction (HJ) DNA during genetic recombination and DNA repair, while the RuvA-RuvB complex plays an important role in the rescue of blocked DNA replication forks via replication fork reversal (RFR). RuvA specifically binds to HJ cruciform DNA, conferring on it an open structure. The RuvB hexamer acts as an ATP-dependent pump, pulling dsDNA into and through the RuvAB complex. RuvB forms 2 homohexamers on either side of HJ DNA bound by 1 or 2 RuvA tetramers; 4 subunits per hexamer contact DNA at a time. Coordinated motions by a converter formed by DNA-disengaged RuvB subunits stimulates ATP hydrolysis and nucleotide exchange. Immobilization of the converter enables RuvB to convert the ATP-contained energy into a lever motion, pulling 2 nucleotides of DNA out of the RuvA tetramer per ATP hydrolyzed, thus driving DNA branch migration. The RuvB motors rotate together with the DNA substrate, which together with the progressing nucleotide cycle form the mechanistic basis for DNA recombination by continuous HJ branch migration. Branch migration allows RuvC to scan DNA until it finds its consensus sequence, where it cleaves and resolves cruciform DNA. This is Holliday junction branch migration complex subunit RuvB from Rhizobium leguminosarum bv. trifolii (strain WSM2304).